Reading from the N-terminus, the 414-residue chain is Chaperone protein dnaJ 39 (414 aa).

Residues 1 to 24 are compositionally biased toward basic and acidic residues; it reads MATHSSRSENKDAGEEDELRRRNP. A disordered region spans residues 1–36; sequence MATHSSRSENKDAGEEDELRRRNPYEVLGIPSNSTD. Residues 23–88 enclose the J domain; sequence NPYEVLGIPS…ENRRLYDTTG (66 aa). The stretch at 296 to 324 forms a coiled coil; sequence EKESLRSTEAQIVSKRTELLKFEAEYHEV. Residues 362–395 are disordered; sequence TKQGSSKSRSWSKKKSSLLMEPREEGEVAVREEG. Residues 382–395 show a composition bias toward basic and acidic residues; it reads EPREEGEVAVREEG.

The protein belongs to the DnaJ family. C/III subfamily. As to expression, expressed constitutively at low levels in seedlings, roots, leaves, stems, flowers and siliques.

It localises to the membrane. Functionally, plays a continuous role in plant development probably in the structural organization of compartments. Seems to be involved in early gravitropic signal transduction within the gravity-perceiving cells (statocytes). The protein is Chaperone protein dnaJ 39 (ATJ39) of Arabidopsis thaliana (Mouse-ear cress).